The sequence spans 161 residues: Crossover junction endodeoxyribonuclease RuvC (161 aa).

Active-site residues include Asp9, Glu69, and His144. The Mg(2+) site is built by Asp9, Glu69, and His144.

It belongs to the RuvC family. In terms of assembly, homodimer which binds Holliday junction (HJ) DNA. The HJ becomes 2-fold symmetrical on binding to RuvC with unstacked arms; it has a different conformation from HJ DNA in complex with RuvA. In the full resolvosome a probable DNA-RuvA(4)-RuvB(12)-RuvC(2) complex forms which resolves the HJ. Mg(2+) serves as cofactor.

It is found in the cytoplasm. It catalyses the reaction Endonucleolytic cleavage at a junction such as a reciprocal single-stranded crossover between two homologous DNA duplexes (Holliday junction).. The RuvA-RuvB-RuvC complex processes Holliday junction (HJ) DNA during genetic recombination and DNA repair. Endonuclease that resolves HJ intermediates. Cleaves cruciform DNA by making single-stranded nicks across the HJ at symmetrical positions within the homologous arms, yielding a 5'-phosphate and a 3'-hydroxyl group; requires a central core of homology in the junction. The consensus cleavage sequence is 5'-(A/T)TT(C/G)-3'. Cleavage occurs on the 3'-side of the TT dinucleotide at the point of strand exchange. HJ branch migration catalyzed by RuvA-RuvB allows RuvC to scan DNA until it finds its consensus sequence, where it cleaves and resolves the cruciform DNA. This is Crossover junction endodeoxyribonuclease RuvC from Borrelia turicatae (strain 91E135).